We begin with the raw amino-acid sequence, 119 residues long: Holo-[acyl-carrier-protein] synthase (119 aa).

Aspartate 8 and glutamate 59 together coordinate Mg(2+).

Belongs to the P-Pant transferase superfamily. AcpS family. The cofactor is Mg(2+).

The protein localises to the cytoplasm. The enzyme catalyses apo-[ACP] + CoA = holo-[ACP] + adenosine 3',5'-bisphosphate + H(+). Transfers the 4'-phosphopantetheine moiety from coenzyme A to a Ser of acyl-carrier-protein. This Lactococcus lactis subsp. lactis (strain IL1403) (Streptococcus lactis) protein is Holo-[acyl-carrier-protein] synthase.